The chain runs to 325 residues: tRNA N6-adenosine threonylcarbamoyltransferase (325 aa).

Fe cation contacts are provided by His110 and His114. Substrate is bound by residues 133–137 (MVSGG), Asp165, Gly178, and Asn268. Asp296 is a Fe cation binding site.

Belongs to the KAE1 / TsaD family. The cofactor is Fe(2+).

The protein resides in the cytoplasm. It catalyses the reaction L-threonylcarbamoyladenylate + adenosine(37) in tRNA = N(6)-L-threonylcarbamoyladenosine(37) in tRNA + AMP + H(+). Functionally, required for the formation of a threonylcarbamoyl group on adenosine at position 37 (t(6)A37) in tRNAs that read codons beginning with adenine. Is involved in the transfer of the threonylcarbamoyl moiety of threonylcarbamoyl-AMP (TC-AMP) to the N6 group of A37, together with TsaE and TsaB. TsaD likely plays a direct catalytic role in this reaction. This is tRNA N6-adenosine threonylcarbamoyltransferase from Thermosipho melanesiensis (strain DSM 12029 / CIP 104789 / BI429).